A 605-amino-acid polypeptide reads, in one-letter code: Elongation factor 4 (605 aa).

The 184-residue stretch at 9–192 (NRIRNFCIIA…AIVQRIPAPA (184 aa)) folds into the tr-type G domain. GTP contacts are provided by residues 21 to 26 (DHGKST) and 139 to 142 (NKID).

The protein belongs to the TRAFAC class translation factor GTPase superfamily. Classic translation factor GTPase family. LepA subfamily.

Its subcellular location is the cell inner membrane. It catalyses the reaction GTP + H2O = GDP + phosphate + H(+). Required for accurate and efficient protein synthesis under certain stress conditions. May act as a fidelity factor of the translation reaction, by catalyzing a one-codon backward translocation of tRNAs on improperly translocated ribosomes. Back-translocation proceeds from a post-translocation (POST) complex to a pre-translocation (PRE) complex, thus giving elongation factor G a second chance to translocate the tRNAs correctly. Binds to ribosomes in a GTP-dependent manner. The chain is Elongation factor 4 from Pelodictyon phaeoclathratiforme (strain DSM 5477 / BU-1).